Here is a 183-residue protein sequence, read N- to C-terminus: Dual-action ribosomal maturation protein DarP (183 aa).

The disordered stretch occupies residues 1-20 (MKQKYEDWLNDVPDNQEDDE).

Belongs to the DarP family.

It localises to the cytoplasm. Member of a network of 50S ribosomal subunit biogenesis factors which assembles along the 30S-50S interface, preventing incorrect 23S rRNA structures from forming. Promotes peptidyl transferase center (PTC) maturation. In Pectobacterium carotovorum subsp. carotovorum (strain PC1), this protein is Dual-action ribosomal maturation protein DarP.